We begin with the raw amino-acid sequence, 153 residues long: MTASKRVAKELDDLSKELPPYLRHLSSDDANVLVWHMLLLPDQLPYRLKAFGLRIDFPREYPLKPPTLRFTTKIYHPNISEDGLVCLPLISTENWKPYTKAYQVLEALNILVSRPNLEEPVRLELADLLTQDPEMFRKKAEEFTLQYGVDRPS.

A UBC core domain is found at 2–149; the sequence is TASKRVAKEL…AEEFTLQYGV (148 aa). The Glycyl thioester intermediate role is filled by Cys-86.

It belongs to the ubiquitin-conjugating enzyme family. Interacts with RNF19A, RNF19B and RNF144B. Interacts with FLT3 (tyrosine phosphorylated). ISGylated.

It catalyses the reaction S-ubiquitinyl-[E1 ubiquitin-activating enzyme]-L-cysteine + [E2 ubiquitin-conjugating enzyme]-L-cysteine = [E1 ubiquitin-activating enzyme]-L-cysteine + S-ubiquitinyl-[E2 ubiquitin-conjugating enzyme]-L-cysteine.. Its pathway is protein modification; protein ubiquitination. Its function is as follows. Catalyzes the covalent attachment of ubiquitin to other proteins. Functions in the E6/E6-AP-induced ubiquitination of p53/TP53. Promotes ubiquitination and subsequent proteasomal degradation of FLT3. This Rattus norvegicus (Rat) protein is Ubiquitin/ISG15-conjugating enzyme E2 L6 (Ube2l6).